The sequence spans 137 residues: Small ribosomal subunit protein uS11 (137 aa).

Over residues 1 to 11 (MPPKSRSTGPK) the composition is skewed to polar residues. Disordered regions lie at residues 1–28 (MPPKSRSTGPKKTQKARRRDKKNVPHGA) and 117–137 (TISDVTPQPHNGCRPPKRRRV). Over residues 12–21 (KTQKARRRDK) the composition is skewed to basic residues.

The protein belongs to the universal ribosomal protein uS11 family. As to quaternary structure, part of the 30S ribosomal subunit. Interacts with proteins S7 and S18. Binds to IF-3.

Located on the platform of the 30S subunit, it bridges several disparate RNA helices of the 16S rRNA. Forms part of the Shine-Dalgarno cleft in the 70S ribosome. The protein is Small ribosomal subunit protein uS11 of Rhodococcus opacus (strain B4).